A 399-amino-acid chain; its full sequence is Elongation factor Tu (399 aa).

The tr-type G domain occupies 10–209 (KPHVNIGTIG…EVDAYIPTPE (200 aa)). Positions 19–26 (GHVDHGKT) are G1. 19 to 26 (GHVDHGKT) provides a ligand contact to GTP. Thr-26 contacts Mg(2+). Positions 60 to 64 (GITIA) are G2. A G3 region spans residues 81-84 (DCPG). GTP-binding positions include 81-85 (DCPGH) and 136-139 (NKQD). Residues 136–139 (NKQD) form a G4 region. A G5 region spans residues 174 to 176 (SAL).

It belongs to the TRAFAC class translation factor GTPase superfamily. Classic translation factor GTPase family. EF-Tu/EF-1A subfamily. As to quaternary structure, monomer.

It localises to the cytoplasm. It carries out the reaction GTP + H2O = GDP + phosphate + H(+). In terms of biological role, GTP hydrolase that promotes the GTP-dependent binding of aminoacyl-tRNA to the A-site of ribosomes during protein biosynthesis. The sequence is that of Elongation factor Tu from Helicobacter pylori (strain G27).